A 249-amino-acid polypeptide reads, in one-letter code: Probable transcriptional regulatory protein LIC_12886 (249 aa).

This sequence belongs to the TACO1 family.

It is found in the cytoplasm. The protein is Probable transcriptional regulatory protein LIC_12886 of Leptospira interrogans serogroup Icterohaemorrhagiae serovar copenhageni (strain Fiocruz L1-130).